The chain runs to 601 residues: MSSSFFIPFLVSQILLSLFFSIIILIKKLLRTQITVGTHYYISVISLLALIAPFIPFHFLKSHHFDWILNLGGAQSALSQTHSTDKTTEAIGQHVNWVQDFSLSIEQSSSKMIDSAFFAVWILGVAVMLLATLYSNLKIGKIKKNLQIVNNKELLSLFHTCKEEIRFHQKVILSRSPLIKSPITFGVIRPYIILPKDISMFSADEMKCVLLHELYHCKRKDMLINYFLCLLKIVYWFNPLVWYLSKEAKTEMEISCDFAVLKTLDKKLHLKYGEVILKFTSIKQRTSSLLAASEFSSSYKHIKRRIVTVVNFQTASPLLKAKSALVFTLVLGAILAGTPSVSILAMQKETRFLPGTNVEYEDYSTFFDKFSASGGFVLFNSNRKKYTIYNRKESTSRFAPASTYKVFSALLALESGIITKNDSHMTWDGTQYPYKEWNQDQDLFSAMSSSTTWYFQKLDRQIGEDHLRHYLKSIHYGNEDFSVPADYWLDGSLQISPLEQVNILKKFYDNEFDFKQSNIETVKDSIRLEESNGRVLSGKTGTSVINGELHAGWFIGYVETADNTFFFAVHIQGEKRAAGSSAAEIALSILDKKGIYPSVSR.

The Extracellular segment spans residues 1 to 8 (MSSSFFIP). A helical transmembrane segment spans residues 9 to 26 (FLVSQILLSLFFSIIILI). Residues 27 to 35 (KKLLRTQIT) lie on the Cytoplasmic side of the membrane. The chain crosses the membrane as a helical span at residues 36–52 (VGTHYYISVISLLALIA). Over 53–115 (PFIPFHFLKS…EQSSSKMIDS (63 aa)) the chain is Extracellular. Residues 116 to 133 (AFFAVWILGVAVMLLATL) traverse the membrane as a helical segment. Residues 134–322 (YSNLKIGKIK…QTASPLLKAK (189 aa)) are Cytoplasmic-facing. Residues 323 to 339 (SALVFTLVLGAILAGTP) traverse the membrane as a helical segment. The Extracellular portion of the chain corresponds to 340 to 601 (SVSILAMQKE…KKGIYPSVSR (262 aa)). The interval 354 to 601 (PGTNVEYEDY…KKGIYPSVSR (248 aa)) is beta-lactam antibiotic sensor domain. The Acyl-ester intermediate role is filled by Ser402. An N6-carboxylysine modification is found at Lys405.

Belongs to the peptidase M56 family. In terms of processing, carboxylation occurs on two lysine residues. Carboxylation at 'Lys-405' activates the active site serine residue for acylation. On acylation, the lysine side chain experiences a spontaneous decarboxylation that entraps the sensor in its activated state.

The protein resides in the cell membrane. Functionally, integral membrane protein involved in sensing of the presence of beta-lactam antibiotics and transduction of the information to the cytoplasm. Mechanistically, activation of the signal transducer involves acylation of a serine in the C-terminal sensor domain upon binding of the beta-lactam antibiotic. In turn, a conformational change occurs and the signal is transmitted from the cell surface to the cytoplasm. There, the zinc protease domain is activated and initiates autoproteolysis as well as cleavage of the transcriptional repressor BlaI leading to derepression of antibiotic resistance genes. In Bacillus licheniformis, this protein is Regulatory protein BlaR1 (blaR1).